The primary structure comprises 264 residues: MKPTTIASLQKCKQEKKRFATITAYDYSFAKLFADEGLNVILVGDSLGMTVQGHDSTLPVTVADIAYHTTAVRRGAPNGLLLADLPFMAYATPEQAFENAATVMRAGANMVKIEGGEWLVETVKMLTERAVPVCGHLGLTPQSVNIFGGYKVQGRGDEASDRLLSDALALEAAGAQLLVLECVPVELAKRITEALVIPVIGIGAGNVTDGQILVMHDAFGITGGHIPKFAKNFLAETGDIRAAVRQYKAEVESGVYPGEEHSFH.

Mg(2+) contacts are provided by aspartate 45 and aspartate 84. 3-methyl-2-oxobutanoate is bound by residues 45–46 (DS), aspartate 84, and lysine 112. Glutamate 114 contributes to the Mg(2+) binding site. Glutamate 181 acts as the Proton acceptor in catalysis.

It belongs to the PanB family. As to quaternary structure, homodecamer; pentamer of dimers. Mg(2+) serves as cofactor.

The protein localises to the cytoplasm. It catalyses the reaction 3-methyl-2-oxobutanoate + (6R)-5,10-methylene-5,6,7,8-tetrahydrofolate + H2O = 2-dehydropantoate + (6S)-5,6,7,8-tetrahydrofolate. It functions in the pathway cofactor biosynthesis; (R)-pantothenate biosynthesis; (R)-pantoate from 3-methyl-2-oxobutanoate: step 1/2. Its function is as follows. Catalyzes the reversible reaction in which hydroxymethyl group from 5,10-methylenetetrahydrofolate is transferred onto alpha-ketoisovalerate to form ketopantoate. This is 3-methyl-2-oxobutanoate hydroxymethyltransferase from Shigella dysenteriae serotype 1 (strain Sd197).